Reading from the N-terminus, the 155-residue chain is Eosinophil cationic protein (155 aa).

An N-terminal signal peptide occupies residues 1–25 (MGLKLLESRLCLLLSLGLVLMLASC). The Proton acceptor role is filled by His38. 4 disulfides stabilise this stretch: Cys47/Cys106, Cys61/Cys118, Cys79/Cys133, and Cys86/Cys94. Residue 62–66 (KDINT) coordinates substrate. Residues Asn88 and Asn107 are each glycosylated (N-linked (GlcNAc...) asparagine). The active-site Proton donor is His150.

This sequence belongs to the pancreatic ribonuclease family.

The protein resides in the cytoplasmic granule. In terms of biological role, cytotoxin and helminthotoxin with ribonuclease activity. Possesses a wide variety of biological activities. This chain is Eosinophil cationic protein (Rnase3), found in Rattus norvegicus (Rat).